The chain runs to 338 residues: Lipoate-protein ligase A (338 aa).

A BPL/LPL catalytic domain is found at 29–216; it reads PATQRVLFLW…AFFAHYGERV (188 aa). Residues arginine 71, 76-79, and lysine 134 contribute to the ATP site; that span reads GAVF. Lysine 134 lines the (R)-lipoate pocket.

The protein belongs to the LplA family. In terms of assembly, monomer.

It is found in the cytoplasm. It carries out the reaction L-lysyl-[lipoyl-carrier protein] + (R)-lipoate + ATP = N(6)-[(R)-lipoyl]-L-lysyl-[lipoyl-carrier protein] + AMP + diphosphate + H(+). It functions in the pathway protein modification; protein lipoylation via exogenous pathway; protein N(6)-(lipoyl)lysine from lipoate: step 1/2. The protein operates within protein modification; protein lipoylation via exogenous pathway; protein N(6)-(lipoyl)lysine from lipoate: step 2/2. Its function is as follows. Catalyzes both the ATP-dependent activation of exogenously supplied lipoate to lipoyl-AMP and the transfer of the activated lipoyl onto the lipoyl domains of lipoate-dependent enzymes. This is Lipoate-protein ligase A from Escherichia coli O81 (strain ED1a).